A 350-amino-acid chain; its full sequence is B1 bradykinin receptor (350 aa).

Topologically, residues 1–41 are extracellular; sequence MASRAPLELLPLNRSQLSPPNATTCDDAPEAWDLLHRVLPS. Residues asparagine 13 and asparagine 21 are each glycosylated (N-linked (GlcNAc...) asparagine). A helical membrane pass occupies residues 42 to 62; the sequence is VIIIICVCGLLGNLLVLAVLL. The Cytoplasmic segment spans residues 63–72; that stretch reads RPRRRLNVAE. Residues 73–93 traverse the membrane as a helical segment; sequence MYLANLAASDLVFVLGLPFWA. Topologically, residues 94–110 are extracellular; that stretch reads ANISNQFRWPFGGLLCR. N-linked (GlcNAc...) asparagine glycosylation is present at asparagine 95. Residues cysteine 109 and cysteine 186 are joined by a disulfide bond. The helical transmembrane segment at 111–131 threads the bilayer; that stretch reads LVNGVIKANLFISIFLVVAIS. The Cytoplasmic segment spans residues 132-150; sequence RDRYRALVHPMATRRRRQA. The helical transmembrane segment at 151 to 171 threads the bilayer; the sequence is RATCVLIWVAGSLLSVPTFLF. The Extracellular segment spans residues 172–204; it reads RSIEAVPELNNDSACVLLHPPGAWHVARMVELN. N-linked (GlcNAc...) asparagine glycosylation is present at asparagine 182. The helical transmembrane segment at 205–225 threads the bilayer; that stretch reads VLGFLLPLAAIVFFNCHILAS. Topologically, residues 226–248 are cytoplasmic; the sequence is LRGRPEVRGARCGGPPDGRTTAL. Residues 249–269 traverse the membrane as a helical segment; the sequence is ILTFVAAFLVCWTPYHFFAFL. At 270-292 the chain is on the extracellular side; sequence EFLTQVQVVRGCFWENFKDLGLQ. A helical transmembrane segment spans residues 293–313; sequence YASFFAFINSCLNPVIYVFVG. Over 314–350 the chain is Cytoplasmic; it reads RLFRTRVWDLFKQCAPRRPPAVSWSHRKRVLQLFWQN. The S-palmitoyl cysteine moiety is linked to residue cysteine 327.

This sequence belongs to the G-protein coupled receptor 1 family. Bradykinin receptor subfamily. BDKRB1 sub-subfamily.

Its subcellular location is the cell membrane. Functionally, this is a receptor for bradykinin. Could be a factor in chronic pain and inflammation. This Canis lupus familiaris (Dog) protein is B1 bradykinin receptor (BDKRB1).